Reading from the N-terminus, the 255-residue chain is RNA polymerase sigma-F factor (255 aa).

The short motif at 61–74 (DLFQIGCIGLLKSV) is the Polymerase core binding element. Positions 221 to 240 (QSEVADRLGISQVQVSRLEK) form a DNA-binding region, H-T-H motif.

This sequence belongs to the sigma-70 factor family.

Sigma factors are initiation factors that promote the attachment of RNA polymerase to specific initiation sites and are then released. This sigma factor is responsible for the expression of sporulation specific genes. The sequence is that of RNA polymerase sigma-F factor (sigF) from Bacillus licheniformis.